The sequence spans 253 residues: Imidazole glycerol phosphate synthase subunit HisF (253 aa).

Catalysis depends on residues aspartate 11 and aspartate 130.

The protein belongs to the HisA/HisF family. In terms of assembly, heterodimer of HisH and HisF.

The protein resides in the cytoplasm. The enzyme catalyses 5-[(5-phospho-1-deoxy-D-ribulos-1-ylimino)methylamino]-1-(5-phospho-beta-D-ribosyl)imidazole-4-carboxamide + L-glutamine = D-erythro-1-(imidazol-4-yl)glycerol 3-phosphate + 5-amino-1-(5-phospho-beta-D-ribosyl)imidazole-4-carboxamide + L-glutamate + H(+). It participates in amino-acid biosynthesis; L-histidine biosynthesis; L-histidine from 5-phospho-alpha-D-ribose 1-diphosphate: step 5/9. Functionally, IGPS catalyzes the conversion of PRFAR and glutamine to IGP, AICAR and glutamate. The HisF subunit catalyzes the cyclization activity that produces IGP and AICAR from PRFAR using the ammonia provided by the HisH subunit. The protein is Imidazole glycerol phosphate synthase subunit HisF of Dehalococcoides mccartyi (strain CBDB1).